The following is a 782-amino-acid chain: MDVTELEENLFAASDAKLHGDMCKELSGVLCKVLSIFPSLEGARPRSKSGIQALCSLHIALEKAKNILQHCSECSKLYLAITGDAVLLKFEKAKIALIDGLKRVEDIVPSSIGSQILEIVGELENTRFMLDPSEKEVGDQIIALLQQGKKFDNCNDNTELEIFHRAATRLSITSSRVALAERRALKKLIDRARAEEDKRKESIVAYLLHLMRKCSKLFRSEILDENDSPGSYPCSPNEDHGSVHGFGRQLSRFGSLNDKPMNSINSGQMPVPPEELRCPISLQLMCDPVIIASGQTYERVCIEKWFSDGHNTCPKTQQQLPHISLTPNNCVKGLIASWCEQNGTQIPSGPPESQDLDYWRLALSDSESTKSQSVNSIGSYKLKGVKIVPLEENGTTVVERQNTEESFVSDDDDEEDSDINVLERYQDLLAVLNEEEGLEKKCKVVEKIRLLLKDDEEARIFMGANGFVEALLRFLGSAVDDNNAAAQDSGAMALFNLAVNNNRNKELMLTSGVIRLLEKMISSAESHGSATALYLNLSCLDEAKSVIGSSQAVPFLVQLLQKEIETQCKLDALHALYNLSTYSPNIPALLSSNIIKSLQGLLASTGENLWIEKSLAVLLNLASSQEGKDEAVSSQGMISSLATVLDMGDTTEQEQAVSCLLILCNGRESCIQMVLQEGVIPSLVSISVNGTPRGREKSQKLLMLFREERQQRDQPSSNRDEPPQKEPARKSLSAPLSVHGSTPASASVQDYEPRVLSKSMSRRKSMARPFSFFWKKSYSVRE.

A U-box domain is found at 271–345 (VPPEELRCPI…ASWCEQNGTQ (75 aa)). 5 ARM repeats span residues 456-499 (EEAR…NLAV), 502-541 (NRNK…SCLD), 542-581 (EAKS…NLST), 583-623 (SPNI…NLAS), and 626-665 (EGKD…ILCN). The segment covering 707 to 729 (EERQQRDQPSSNRDEPPQKEPAR) has biased composition (basic and acidic residues). Positions 707–765 (EERQQRDQPSSNRDEPPQKEPARKSLSAPLSVHGSTPASASVQDYEPRVLSKSMSRRKS) are disordered. Residues 739-748 (HGSTPASASV) show a composition bias toward polar residues.

It carries out the reaction S-ubiquitinyl-[E2 ubiquitin-conjugating enzyme]-L-cysteine + [acceptor protein]-L-lysine = [E2 ubiquitin-conjugating enzyme]-L-cysteine + N(6)-ubiquitinyl-[acceptor protein]-L-lysine.. It functions in the pathway protein modification; protein ubiquitination. In terms of biological role, functions as an E3 ubiquitin ligase. The polypeptide is U-box domain-containing protein 7 (PUB7) (Arabidopsis thaliana (Mouse-ear cress)).